Reading from the N-terminus, the 111-residue chain is Estrogen receptor (111 aa).

Positions Pro-1 to Glu-42 are disordered. A modulating region spans residues Pro-1 to Tyr-49. Over residues Ser-19–Leu-30 the composition is skewed to basic and acidic residues. Ser-32 carries the phosphoserine modification. 2 consecutive NR C4-type zinc fingers follow at residues Cys-50–Cys-70 and Cys-86–Cys-110. A DNA-binding region (nuclear receptor) is located at residues Cys-50–Tyr-111.

It belongs to the nuclear hormone receptor family. NR3 subfamily. As to quaternary structure, binds DNA as a homodimer. Can form a heterodimer with ESR2. Interacts with coactivator NCOA5. Interacts with PELP1, the interaction is enhanced by 17-beta-estradiol; the interaction increases ESR1 transcriptional activity. Interacts with NCOA7; the interaction is ligand-inducible. Interacts with AKAP13, CUEDC2, HEXIM1, KDM5A, MAP1S, SMARD1, and UBE1C. Interacts with MUC1; the interaction is stimulated by 7 beta-estradiol (E2) and enhances ESR1-mediated transcription. Interacts with DNTTIP2, and UIMC1. Interacts with KMT2D/MLL2. Interacts with ATAD2; the interaction is enhanced by estradiol. Interacts with KIF18A and LDB1. Interacts with RLIM (via its C-terminus). Interacts with MACROD1. Interacts with SH2D4A and PLCG. Interacts with SH2D4A; the interaction blocks binding to PLCG and inhibits estrogen-induced cell proliferation. Interacts with DYNLL1. Interacts with CCDC62; the interaction requires estradiol and appears to enhance the transcription of target genes. Interacts with NR2C1; the interaction prevents homodimerization of ESR1 and suppresses its transcriptional activity and cell growth. Interacts with DNAAF4. Interacts with PRMT2. Interacts with RBFOX2. Interacts with EP300; the interaction is estrogen-dependent and enhanced by CITED1. Interacts with CITED1; the interaction is estrogen-dependent. Interacts with FAM120B, FOXL2, PHB2 and SLC30A9. Interacts with coactivators NCOA3 and NCOA6. Interacts with STK3/MST2 only in the presence of SAV1 and vice-versa. Binds to CSNK1D. Interacts with NCOA2; NCOA2 can interact with ESR1 AF-1 and AF-2 domains simultaneously and mediate their transcriptional synergy. Interacts with DDX5. Interacts with NCOA1; the interaction seems to require a self-association of N-terminal and C-terminal regions. Interacts with ZNF366, DDX17, NFKB1, RELA, SP1 and SP3. Interacts with NRIP1. Interacts with GPER1; the interaction occurs in an estrogen-dependent manner. Interacts with CLOCK and the interaction is stimulated by estrogen. Interacts with TRIP4 (ufmylated); estrogen dependent. Interacts with LMTK3; the interaction phosphorylates ESR1 (in vitro) and protects it against proteasomal degradation. Interacts with CCAR2 (via N-terminus) in a ligand-independent manner. Interacts with ZFHX3. Interacts with SFR1 in a ligand-dependent and -independent manner. Interacts with DCAF13, LATS1 and DCAF1; regulates ESR1 ubiquitination and ubiquitin-mediated proteasomal degradation. Interacts (via DNA-binding domain) with POU4F2 (C-terminus); this interaction increases the estrogen receptor ESR1 transcriptional activity in a DNA- and ligand 17-beta-estradiol-independent manner. Interacts with ESRRB isoform 1. Interacts with UBE3A and WBP2. Interacts with GTF2B. Interacts with RBM39. In the absence of hormonal ligand, interacts with TACC1. Interacts with PI3KR1 or PI3KR2 and PTK2/FAK1. Interacts with SRC. Interacts with BAG1; the interaction is promoted in the absence of estradiol (17-beta-estradiol/E2). Interacts with and ubiquitinated by STUB1; the interaction is promoted in the absence of estradiol (17-beta-estradiol/E2). Interacts with NEDD8. Ubiquitinated; regulated by LATS1 via DCAF1 it leads to ESR1 proteasomal degradation. Deubiquitinated by OTUB1. Ubiquitinated by STUB1/CHIP; in the CA1 hippocampal region following loss of endogenous circulating estradiol (17-beta-estradiol/E2). Ubiquitinated by UBR5, leading to its degradation: UBR5 specifically recognizes and binds ligand-bound ESR1 when it is not associated with coactivators (NCOAs). In presence of NCOAs, the UBR5-degron is not accessible, preventing its ubiquitination and degradation. Post-translationally, dimethylated by PRMT1. Demethylated by JMJD6. In terms of processing, palmitoylated by ZDHHC7 and ZDHHC21. This modification is required for plasma membrane targeting and for rapid intracellular signaling via ERK and AKT kinases and cAMP generation, but not for signaling mediated by the nuclear hormone receptor. Phosphorylated by cyclin A/CDK2 and CK1. Phosphorylation probably enhances transcriptional activity. Dephosphorylation by PPP5C inhibits its transactivation activity. Phosphorylated by LMTK3 (in vitro).

It localises to the nucleus. Its subcellular location is the cytoplasm. The protein localises to the golgi apparatus. It is found in the cell membrane. Nuclear hormone receptor. The steroid hormones and their receptors are involved in the regulation of eukaryotic gene expression and affect cellular proliferation and differentiation in target tissues. Ligand-dependent nuclear transactivation involves either direct homodimer binding to a palindromic estrogen response element (ERE) sequence or association with other DNA-binding transcription factors, such as AP-1/c-Jun, c-Fos, ATF-2, Sp1 and Sp3, to mediate ERE-independent signaling. Ligand binding induces a conformational change allowing subsequent or combinatorial association with multiprotein coactivator complexes through LXXLL motifs of their respective components. Mutual transrepression occurs between the estrogen receptor (ER) and NF-kappa-B in a cell-type specific manner. Decreases NF-kappa-B DNA-binding activity and inhibits NF-kappa-B-mediated transcription from the IL6 promoter and displace RELA/p65 and associated coregulators from the promoter. Recruited to the NF-kappa-B response element of the CCL2 and IL8 promoters and can displace CREBBP. Present with NF-kappa-B components RELA/p65 and NFKB1/p50 on ERE sequences. Can also act synergistically with NF-kappa-B to activate transcription involving respective recruitment adjacent response elements; the function involves CREBBP. Can activate the transcriptional activity of TFF1. Also mediates membrane-initiated estrogen signaling involving various kinase cascades. Essential for MTA1-mediated transcriptional regulation of BRCA1 and BCAS3. Maintains neuronal survival in response to ischemic reperfusion injury when in the presence of circulating estradiol (17-beta-estradiol/E2). The protein is Estrogen receptor (ESR1) of Ovis aries (Sheep).